A 497-amino-acid chain; its full sequence is Glucose-6-phosphate 1-dehydrogenase (497 aa).

NADP(+) is bound by residues 17–24 (GASGDLAK), R51, and K151. Residues K151, 181-185 (HYLGK), E219, and D238 each bind D-glucose 6-phosphate. H243 functions as the Proton acceptor in the catalytic mechanism. K334 contacts NADP(+). Residues K337 and R342 each coordinate D-glucose 6-phosphate. Residues K343, R347, and R371 each coordinate NADP(+). Q373 contributes to the D-glucose 6-phosphate binding site. Residues 379–381 (YLK), 399–401 (DLS), R465, and W487 each bind NADP(+).

This sequence belongs to the glucose-6-phosphate dehydrogenase family.

It is found in the cytoplasm. The protein localises to the cytosol. The enzyme catalyses D-glucose 6-phosphate + NADP(+) = 6-phospho-D-glucono-1,5-lactone + NADPH + H(+). It participates in carbohydrate degradation; pentose phosphate pathway; D-ribulose 5-phosphate from D-glucose 6-phosphate (oxidative stage): step 1/3. Its function is as follows. Cytosolic glucose-6-phosphate dehydrogenase that catalyzes the first and rate-limiting step of the oxidative branch within the pentose phosphate pathway/shunt, an alternative route to glycolysis for the dissimilation of carbohydrates and a major source of reducing power and metabolic intermediates for fatty acid and nucleic acid biosynthetic processes. This chain is Glucose-6-phosphate 1-dehydrogenase (g6pd-1), found in Dictyostelium discoideum (Social amoeba).